Reading from the N-terminus, the 492-residue chain is Bifunctional protein GlmU (492 aa).

Residues 1–241 (MTFRGDTAVL…NALVAGVNNR (241 aa)) are pyrophosphorylase. UDP-N-acetyl-alpha-D-glucosamine is bound by residues 12-15 (LAAG), Lys26, Gln83, 88-89 (GT), 112-114 (SGD), Gly151, Glu166, Asn181, and Asn239. Asp114 serves as a coordination point for Mg(2+). Residue Asn239 participates in Mg(2+) binding. Residues 242–262 (VQLAELSAELNRRIVATHQVA) form a linker region. An N-acetyltransferase region spans residues 263–492 (GVTIIDPATT…KQSQQKSEPD (230 aa)). 2 residues coordinate UDP-N-acetyl-alpha-D-glucosamine: Arg344 and Lys362. The active-site Proton acceptor is the His374. Residues Tyr377 and Asn388 each coordinate UDP-N-acetyl-alpha-D-glucosamine. Acetyl-CoA is bound by residues Ala391, 397–398 (NY), Ser416, and Ala434. Residues 461-492 (VQRKRPGSAAAQAAEKASTRTGKQSQQKSEPD) form a disordered region. The span at 479–492 (TRTGKQSQQKSEPD) shows a compositional bias: polar residues.

The protein in the N-terminal section; belongs to the N-acetylglucosamine-1-phosphate uridyltransferase family. This sequence in the C-terminal section; belongs to the transferase hexapeptide repeat family. Homotrimer. Mg(2+) is required as a cofactor.

Its subcellular location is the cytoplasm. The enzyme catalyses alpha-D-glucosamine 1-phosphate + acetyl-CoA = N-acetyl-alpha-D-glucosamine 1-phosphate + CoA + H(+). The catalysed reaction is N-acetyl-alpha-D-glucosamine 1-phosphate + UTP + H(+) = UDP-N-acetyl-alpha-D-glucosamine + diphosphate. It participates in nucleotide-sugar biosynthesis; UDP-N-acetyl-alpha-D-glucosamine biosynthesis; N-acetyl-alpha-D-glucosamine 1-phosphate from alpha-D-glucosamine 6-phosphate (route II): step 2/2. The protein operates within nucleotide-sugar biosynthesis; UDP-N-acetyl-alpha-D-glucosamine biosynthesis; UDP-N-acetyl-alpha-D-glucosamine from N-acetyl-alpha-D-glucosamine 1-phosphate: step 1/1. Its pathway is bacterial outer membrane biogenesis; LPS lipid A biosynthesis. Catalyzes the last two sequential reactions in the de novo biosynthetic pathway for UDP-N-acetylglucosamine (UDP-GlcNAc). The C-terminal domain catalyzes the transfer of acetyl group from acetyl coenzyme A to glucosamine-1-phosphate (GlcN-1-P) to produce N-acetylglucosamine-1-phosphate (GlcNAc-1-P), which is converted into UDP-GlcNAc by the transfer of uridine 5-monophosphate (from uridine 5-triphosphate), a reaction catalyzed by the N-terminal domain. The chain is Bifunctional protein GlmU from Mycobacterium leprae (strain Br4923).